A 1013-amino-acid chain; its full sequence is Poly [ADP-ribose] polymerase 1 (1013 aa).

Ala-2 carries the post-translational modification N-acetylalanine. The segment at 9-93 adopts a PARP-type 1 zinc-finger fold; sequence YRVEYAKSGR…KVKKTAEAGG (85 aa). Cys-21 and Cys-24 together coordinate Zn(2+). Ser-41 carries the post-translational modification Phosphoserine. His-53 and Cys-56 together coordinate Zn(2+). 2 positions are modified to N6-acetyllysine: Lys-97 and Lys-105. The PARP-type 2 zinc finger occupies 113 to 203; the sequence is FAAEYAKSNR…VLKKQLPGVK (91 aa). Zn(2+)-binding residues include Cys-125 and Cys-128. Lys-131 is modified (N6-acetyllysine). Residues His-159 and Cys-162 each contribute to the Zn(2+) site. A phosphoserine mark is found at Ser-177, Ser-179, and Ser-185. Lys-192 participates in a covalent cross-link: Glycyl lysine isopeptide (Lys-Gly) (interchain with G-Cter in SUMO2). The tract at residues 198–233 is disordered; that stretch reads QLPGVKSEGKRKGDEVDGADEVAKKKSKKGKDKDSK. Lys-203 is covalently cross-linked (Glycyl lysine isopeptide (Lys-Gly) (interchain with G-Cter in SUMO1); alternate). Lys-203 is covalently cross-linked (Glycyl lysine isopeptide (Lys-Gly) (interchain with G-Cter in SUMO2); alternate). 2 consecutive short sequence motifs (nuclear localization signal) follow at residues 207–209 and 221–226; these read KRK and KKKSKK. Residues 225–359 enclose the PADR1 zinc-binding domain; the sequence is KKGKDKDSKL…VKKQDRIFPP (135 aa). Lys-249 is covalently cross-linked (Glycyl lysine isopeptide (Lys-Gly) (interchain with G-Cter in SUMO2)). Phosphoserine occurs at positions 274 and 277. The zinc ribbon stretch occupies residues 290 to 332; the sequence is GALLPCKECSGQLVFKSDAYYCTGDVTAWTKCMVKTQTPSRKE. The Zn(2+) site is built by Cys-295, Cys-298, Cys-311, and Cys-321. The disordered stretch occupies residues 357-383; that stretch reads FPPETSAPAPPHLPPSVTSAPTAVNSS. Positions 372–383 are enriched in polar residues; the sequence is SVTSAPTAVNSS. The segment at 373 to 523 is automodification domain; that stretch reads VTSAPTAVNS…GVNKSEKRMK (151 aa). The BRCT domain maps to 385 to 476; the sequence is PADKPLSNMK…KSLQELLSAH (92 aa). Asp-387 is subject to PolyADP-ribosyl aspartic acid. 7 positions are modified to polyADP-ribosyl glutamic acid: Glu-407, Glu-413, Glu-435, Glu-437, Glu-444, Glu-445, and Glu-456. Lys-467 is covalently cross-linked (Glycyl lysine isopeptide (Lys-Gly) (interchain with G-Cter in SUMO2)). PolyADP-ribosyl glutamic acid is present on residues Glu-471 and Glu-484. Lys-486 is covalently cross-linked (Glycyl lysine isopeptide (Lys-Gly) (interchain with G-Cter in SUMO1); alternate). Lys-486 is covalently cross-linked (Glycyl lysine isopeptide (Lys-Gly) (interchain with G-Cter in SUMO2); alternate). Glu-488 and Glu-491 each carry polyADP-ribosyl glutamic acid. The interval 495-516 is disordered; the sequence is PKGKSAAPSKKSKGLYKEEGVN. Residues Ser-499, Ser-503, and Ser-506 each carry the ADP-ribosylserine modification. A Glycyl lysine isopeptide (Lys-Gly) (interchain with G-Cter in SUMO2) cross-link involves residue Lys-511. Residues Glu-512 and Glu-513 each carry the polyADP-ribosyl glutamic acid modification. The residue at position 518 (Ser-518) is an ADP-ribosylserine. A PolyADP-ribosyl glutamic acid modification is found at Glu-519. N6-(ADP-ribosyl)lysine is present on Lys-520. Residue Lys-527 forms a Glycyl lysine isopeptide (Lys-Gly) (interchain with G-Cter in SUMO2) linkage. One can recognise a WGR domain in the interval 541-637; sequence SAHVLEKGGK…KNFTKYPKKF (97 aa). At Thr-593 the chain carries Phosphothreonine. 2 positions are modified to N6-acetyllysine: Lys-599 and Lys-620. In terms of domain architecture, PARP alpha-helical spans 661-778; sequence KSKLPKAVQE…DIEVAYSLLR (118 aa). Residue Lys-747 forms a Glycyl lysine isopeptide (Lys-Gly) (interchain with G-Cter in SUMO1); alternate linkage. Lys-747 participates in a covalent cross-link: Glycyl lysine isopeptide (Lys-Gly) (interchain with G-Cter in SUMO2); alternate. 2 positions are modified to phosphoserine: Ser-781 and Ser-785. The PARP catalytic domain occupies 787 to 1013; sequence DPIDVNYEKL…LKFNFKTSLW (227 aa). NAD(+)-binding positions include 861–863, Gly-870, Arg-877, and Ser-903; that span reads HGS. The active-site For poly [ADP-ribose] polymerase activity is Glu-987.

It belongs to the ARTD/PARP family. In terms of assembly, homodimer; PARP-type zinc-fingers from separate PARP1 molecules form a dimer module that specifically recognizes DNA strand breaks. Heterodimer; heterodimerizes with PARP2. Interacts (via the PARP catalytic domain) with HPF1. Interacts with NMNAT1. Interacts with nucleosomes; with a preference for nucleosomes containing H2A.X. Interacts with APTX. Component of a base excision repair (BER) complex, containing at least XRCC1, PARP1, PARP2, POLB and LRIG3. Interacts with SRY. The SWAP complex consists of NPM1, NCL, PARP1 and SWAP70. Interacts with TIAM2. Interacts with PARP3; leading to activate PARP1 in absence of DNA. Interacts (when poly-ADP-ribosylated) with CHD1L (via macro domain). Interacts with the DNA polymerase alpha catalytic subunit POLA1; this interaction functions as part of the control of replication fork progression. Interacts with EEF1A1 and TXK. Interacts with RNF4. Interacts with RNF146. Interacts with ZNF423. Interacts with APLF. Interacts with SNAI1 (via zinc fingers); the interaction requires SNAI1 to be poly-ADP-ribosylated and non-phosphorylated (active) by GSK3B. Interacts (when poly-ADP-ribosylated) with PARP9. Interacts with NR4A3; activates PARP1 by improving acetylation of PARP1 and suppressing the interaction between PARP1 and SIRT1. Interacts (via catalytic domain) with PUM3; the interaction inhibits the poly-ADP-ribosylation activity of PARP1 and the degradation of PARP1 by CASP3 following genotoxic stress. Interacts with ZNF365. Interacts with RRP1B. Interacts with TIMELESS; the interaction is direct. Interacts with CGAS; leading to impede the formation of the PARP1-TIMELESS complex. Interacts with KHDC3L, the interaction is increased following the formation of DNA double-strand breaks. Interacts (when auto-poly-ADP-ribosylated) with XRCC1; leading to inhibit PARP1 ADP-ribosyltransferase activity. Interacts with SPINDOC; promoting PARP1 ADP-ribosyltransferase activity. Interacts with BANF1; leading to inhibit PARP1 ADP-ribosyltransferase activity in response to oxidative DNA damage. Interacts (when sumoylated and ubiquitinated) with VCP/p97; leading to its extraction from chromatin. Interacts with YARS1; promoting PARP1 ADP-ribosyltransferase activity. Interacts with PACMP micropeptide; Interacts with PACMP micropeptide; interaction. Interacts (when poly-ADP-ribosylated) with isoform 1 of MACROH2A1; MACROH2A1 specifically binds to poly-ADP-ribose chains and inhibits PARP1 activity, limiting the consumption of nuclear NAD(+). Interacts with CARM1; promoting recruitment to replication forks. Interacts with RECQL. Interacts with ZNF32; the interaction reshapes ZNF432 interacting proteins. Interacts with TPRN; TPRN interacts with a number of DNA damage response proteins, is recruited to sites of DNA damage and may play a role in DNA damage repair. Interacts (when auto-poly-ADP-ribosylated) with AIFM1. Poly-ADP-ribosylated on serine, glutamate and aspartate residues by autocatalysis. Auto-ADP-ribosylation on serine takes place following interaction with HPF1. Auto poly-ADP-ribosylation on serine residues promotes its dissociation from chromatin. Poly-ADP-ribosylated by PARP2; poly-ADP-ribosylation mediates the recruitment of CHD1L to DNA damage sites. Mono-ADP-ribosylated at Lys-520 by SIRT6 in response to oxidative stress, promoting recruitment to double-strand breaks (DSBs) sites. In terms of processing, S-nitrosylated, leading to inhibit transcription regulation activity. Post-translationally, phosphorylated at Thr-593 by PRKDC in response to DNA damage following virus infection, promoting its translocation to the cytosol. Phosphorylated by TXK. Proteolytically cleaved by caspase-3 (CASP3) and caspase-7 (CASP7) in response to apoptosis to generate the Poly [ADP-ribose] polymerase 1, processed N-terminus and Poly [ADP-ribose] polymerase 1, processed C-terminus forms. In terms of processing, sumoylated with SUMO1 or SUMO2 by PIAS4 following prolonged residence (trapping) to chromatin. Sumoylation promotes ubiquitination by RNF4 and removal from chromatin by VCP/p97. Post-translationally, ubiquitinated by RNF4 following sumoylation by PIAS4 in response to prolonged residence (trapping) to chromatin. Ubiquitination promotes removal from chromatin by VCP/p97.

It is found in the chromosome. The protein localises to the nucleus. The protein resides in the nucleolus. Its subcellular location is the cytoplasm. It localises to the cytosol. It carries out the reaction NAD(+) + (ADP-D-ribosyl)n-acceptor = nicotinamide + (ADP-D-ribosyl)n+1-acceptor + H(+).. The enzyme catalyses L-seryl-[protein] + NAD(+) = O-(ADP-D-ribosyl)-L-seryl-[protein] + nicotinamide + H(+). The catalysed reaction is L-aspartyl-[protein] + NAD(+) = 4-O-(ADP-D-ribosyl)-L-aspartyl-[protein] + nicotinamide. It catalyses the reaction L-glutamyl-[protein] + NAD(+) = 5-O-(ADP-D-ribosyl)-L-glutamyl-[protein] + nicotinamide. It carries out the reaction L-tyrosyl-[protein] + NAD(+) = O-(ADP-D-ribosyl)-L-tyrosyl-[protein] + nicotinamide + H(+). The enzyme catalyses L-histidyl-[protein] + NAD(+) = N(tele)-(ADP-D-ribosyl)-L-histidyl-[protein] + nicotinamide + H(+). ADP-ribosyltransferase activity is regulated via an allosteric activation mechanism. In absence of activation signal, PARP1 is autoinhibited by the PARP alpha-helical domain (also named HD region), which prevents effective NAD(+)-binding. Activity is highly stimulated by signals, such as DNA strand breaks. Binding to damaged DNA unfolds the PARP alpha-helical domain, relieving autoinhibition. Poly-ADP-ribosyltransferase activity is tightly regulated and PARP1 is removed from damaged chromatin following initial poly-ADP-ribosylation of chromatin to avoid prolonged residence (trapping) that has cytotoxic consequences. A number of factors (VCP/p97) or post-translational modifications (auto-poly-ADP-ribosylation or ubiquitination) promote PARP1 removal from chromatin. Poly-ADP-ribosyltransferase that mediates poly-ADP-ribosylation of proteins and plays a key role in DNA repair. Mediates glutamate, aspartate, serine, histidine or tyrosine ADP-ribosylation of proteins: the ADP-D-ribosyl group of NAD(+) is transferred to the acceptor carboxyl group of target residues and further ADP-ribosyl groups are transferred to the 2'-position of the terminal adenosine moiety, building up a polymer with an average chain length of 20-30 units. Serine ADP-ribosylation of proteins constitutes the primary form of ADP-ribosylation of proteins in response to DNA damage. Specificity for the different amino acids is conferred by interacting factors, such as HPF1 and NMNAT1. Following interaction with HPF1, catalyzes serine ADP-ribosylation of target proteins; HPF1 confers serine specificity by completing the PARP1 active site. Also catalyzes tyrosine ADP-ribosylation of target proteins following interaction with HPF1. Following interaction with NMNAT1, catalyzes glutamate and aspartate ADP-ribosylation of target proteins; NMNAT1 confers glutamate and aspartate specificity. PARP1 initiates the repair of DNA breaks: recognizes and binds DNA breaks within chromatin and recruits HPF1, licensing serine ADP-ribosylation of target proteins, such as histones (H2BS6ADPr and H3S10ADPr), thereby promoting decompaction of chromatin and the recruitment of repair factors leading to the reparation of DNA strand breaks. HPF1 initiates serine ADP-ribosylation but restricts the polymerase activity of PARP1 in order to limit the length of poly-ADP-ribose chains. In addition to base excision repair (BER) pathway, also involved in double-strand breaks (DSBs) repair: together with TIMELESS, accumulates at DNA damage sites and promotes homologous recombination repair by mediating poly-ADP-ribosylation. Mediates the poly-ADP-ribosylation of a number of proteins, including itself, APLF, CHFR and NFAT5. In addition to proteins, also able to ADP-ribosylate DNA: catalyzes ADP-ribosylation of DNA strand break termini containing terminal phosphates and a 2'-OH group in single- and double-stranded DNA, respectively. Required for PARP9 and DTX3L recruitment to DNA damage sites. PARP1-dependent PARP9-DTX3L-mediated ubiquitination promotes the rapid and specific recruitment of 53BP1/TP53BP1, UIMC1/RAP80, and BRCA1 to DNA damage sites. PARP1-mediated DNA repair in neurons plays a role in sleep: senses DNA damage in neurons and promotes sleep, facilitating efficient DNA repair. In addition to DNA repair, also involved in other processes, such as transcription regulation, programmed cell death, membrane repair, adipogenesis and innate immunity. Acts as a repressor of transcription: binds to nucleosomes and modulates chromatin structure in a manner similar to histone H1, thereby altering RNA polymerase II. Acts both as a positive and negative regulator of transcription elongation, depending on the context. Acts as a positive regulator of transcription elongation by mediating poly-ADP-ribosylation of NELFE, preventing RNA-binding activity of NELFE and relieving transcription pausing. Acts as a negative regulator of transcription elongation in response to DNA damage by catalyzing poly-ADP-ribosylation of CCNT1, disrupting the phase separation activity of CCNT1 and subsequent activation of CDK9. Involved in replication fork progression following interaction with CARM1: mediates poly-ADP-ribosylation at replication forks, slowing fork progression. Poly-ADP-ribose chains generated by PARP1 also play a role in poly-ADP-ribose-dependent cell death, a process named parthanatos. Also acts as a negative regulator of the cGAS-STING pathway. Acts by mediating poly-ADP-ribosylation of CGAS: PARP1 translocates into the cytosol following phosphorylation by PRKDC and catalyzes poly-ADP-ribosylation and inactivation of CGAS. Acts as a negative regulator of adipogenesis: catalyzes poly-ADP-ribosylation of histone H2B on 'Glu-35' (H2BE35ADPr) following interaction with NMNAT1, inhibiting phosphorylation of H2B at 'Ser-36' (H2BS36ph), thereby blocking expression of pro-adipogenetic genes. Involved in the synthesis of ATP in the nucleus, together with NMNAT1, PARG and NUDT5. Nuclear ATP generation is required for extensive chromatin remodeling events that are energy-consuming. Its function is as follows. Promotes AIFM1-mediated apoptosis. This form, which translocates into the cytoplasm following cleavage by caspase-3 (CASP3) and caspase-7 (CASP7) in response to apoptosis, is auto-poly-ADP-ribosylated and serves as a poly-ADP-ribose carrier to induce AIFM1-mediated apoptosis. Functionally, this cleavage form irreversibly binds to DNA breaks and interferes with DNA repair, promoting DNA damage-induced apoptosis. In Cricetulus griseus (Chinese hamster), this protein is Poly [ADP-ribose] polymerase 1 (PARP1).